The sequence spans 371 residues: Putative agmatine deiminase (371 aa).

The Amidino-cysteine intermediate role is filled by Cys-361.

Belongs to the agmatine deiminase family.

It carries out the reaction agmatine + H2O = N-carbamoylputrescine + NH4(+). The chain is Putative agmatine deiminase from Selenomonas ruminantium.